Consider the following 390-residue polypeptide: UPF0229 protein Cbei_0567 (390 aa).

The tract at residues 77–108 (SGVGNEKRGEKLGNGNKKLAKGNQGAGNEEGD) is disordered. Residues 89 to 103 (GNGNKKLAKGNQGAG) are compositionally biased toward low complexity.

This sequence belongs to the UPF0229 family.

The chain is UPF0229 protein Cbei_0567 from Clostridium beijerinckii (strain ATCC 51743 / NCIMB 8052) (Clostridium acetobutylicum).